Here is a 396-residue protein sequence, read N- to C-terminus: Tryptophan synthase beta chain (396 aa).

The residue at position 86 (Lys86) is an N6-(pyridoxal phosphate)lysine.

It belongs to the TrpB family. In terms of assembly, tetramer of two alpha and two beta chains. It depends on pyridoxal 5'-phosphate as a cofactor.

It carries out the reaction (1S,2R)-1-C-(indol-3-yl)glycerol 3-phosphate + L-serine = D-glyceraldehyde 3-phosphate + L-tryptophan + H2O. Its pathway is amino-acid biosynthesis; L-tryptophan biosynthesis; L-tryptophan from chorismate: step 5/5. Its function is as follows. The beta subunit is responsible for the synthesis of L-tryptophan from indole and L-serine. This is Tryptophan synthase beta chain from Yersinia enterocolitica serotype O:8 / biotype 1B (strain NCTC 13174 / 8081).